Consider the following 163-residue polypeptide: UPF0303 protein SAV_5210 (163 aa).

Belongs to the UPF0303 family.

This Streptomyces avermitilis (strain ATCC 31267 / DSM 46492 / JCM 5070 / NBRC 14893 / NCIMB 12804 / NRRL 8165 / MA-4680) protein is UPF0303 protein SAV_5210.